A 198-amino-acid polypeptide reads, in one-letter code: Nucleoside triphosphate pyrophosphatase (198 aa).

The active-site Proton acceptor is the Asp-74.

This sequence belongs to the Maf family. Requires a divalent metal cation as cofactor.

It localises to the cytoplasm. It carries out the reaction a ribonucleoside 5'-triphosphate + H2O = a ribonucleoside 5'-phosphate + diphosphate + H(+). The enzyme catalyses a 2'-deoxyribonucleoside 5'-triphosphate + H2O = a 2'-deoxyribonucleoside 5'-phosphate + diphosphate + H(+). Nucleoside triphosphate pyrophosphatase. May have a dual role in cell division arrest and in preventing the incorporation of modified nucleotides into cellular nucleic acids. The protein is Nucleoside triphosphate pyrophosphatase of Sphingopyxis alaskensis (strain DSM 13593 / LMG 18877 / RB2256) (Sphingomonas alaskensis).